The primary structure comprises 443 residues: Methyl-coenzyme M reductase subunit beta (443 aa).

A coenzyme M-binding site is contributed by tyrosine 367. Residue glycine 369 participates in coenzyme B binding.

The protein belongs to the methyl-coenzyme M reductase beta subunit family. As to quaternary structure, MCR is a hexamer of two alpha, two beta, and two gamma chains, forming a dimer of heterotrimers. Coenzyme F430 is required as a cofactor.

The protein localises to the cytoplasm. It catalyses the reaction coenzyme B + methyl-coenzyme M = methane + coenzyme M-coenzyme B heterodisulfide. It participates in one-carbon metabolism; methyl-coenzyme M reduction; methane from methyl-coenzyme M: step 1/1. Component of the methyl-coenzyme M reductase (MCR) I that catalyzes the reductive cleavage of methyl-coenzyme M (CoM-S-CH3 or 2-(methylthio)ethanesulfonate) using coenzyme B (CoB or 7-mercaptoheptanoylthreonine phosphate) as reductant which results in the production of methane and the mixed heterodisulfide of CoB and CoM (CoM-S-S-CoB). This is the final step in methanogenesis. This chain is Methyl-coenzyme M reductase subunit beta (mcrB), found in Methanococcus voltae.